The following is a 74-amino-acid chain: MKFQVIAAVLLIEFCLCVVVTARMELQDVEDVENGFQKRRSCIDTIPQSRCTAFQCKHSMKYRLSFCRKTCGTC.

The signal sequence occupies residues methionine 1–alanine 22. Positions arginine 23–arginine 39 are excised as a propeptide. The ShKT domain maps to cysteine 42–cysteine 74. 3 cysteine pairs are disulfide-bonded: cysteine 42-cysteine 74, cysteine 51-cysteine 67, and cysteine 56-cysteine 71.

Belongs to the sea anemone type 1 potassium channel toxin family. Type 1a subfamily.

Its subcellular location is the secreted. It localises to the nematocyst. Inhibits voltage-gated potassium channels (Kv) with higher potency for Kv1.1/KCNA1 and Kv1.3/KCNA3. The sequence is that of Kappa-stichotoxin-Sgt4a from Stichodactyla gigantea (Giant carpet anemone).